The following is a 264-amino-acid chain: Thymidylate synthase (264 aa).

R21 is a binding site for dUMP. H51 is a binding site for (6R)-5,10-methylene-5,6,7,8-tetrahydrofolate. Position 126 to 127 (126 to 127 (RR)) interacts with dUMP. The Nucleophile role is filled by C146. DUMP is bound by residues 166-169 (RSAD), N177, and 207-209 (HIY). A (6R)-5,10-methylene-5,6,7,8-tetrahydrofolate-binding site is contributed by D169. S263 is a (6R)-5,10-methylene-5,6,7,8-tetrahydrofolate binding site.

This sequence belongs to the thymidylate synthase family. Bacterial-type ThyA subfamily. As to quaternary structure, homodimer.

It is found in the cytoplasm. The catalysed reaction is dUMP + (6R)-5,10-methylene-5,6,7,8-tetrahydrofolate = 7,8-dihydrofolate + dTMP. It functions in the pathway pyrimidine metabolism; dTTP biosynthesis. In terms of biological role, catalyzes the reductive methylation of 2'-deoxyuridine-5'-monophosphate (dUMP) to 2'-deoxythymidine-5'-monophosphate (dTMP) while utilizing 5,10-methylenetetrahydrofolate (mTHF) as the methyl donor and reductant in the reaction, yielding dihydrofolate (DHF) as a by-product. This enzymatic reaction provides an intracellular de novo source of dTMP, an essential precursor for DNA biosynthesis. This chain is Thymidylate synthase, found in Bacillus velezensis (strain DSM 23117 / BGSC 10A6 / LMG 26770 / FZB42) (Bacillus amyloliquefaciens subsp. plantarum).